The sequence spans 433 residues: Serine hydroxymethyltransferase (433 aa).

(6S)-5,6,7,8-tetrahydrofolate contacts are provided by residues L132 and G136 to L138. Position 241 is an N6-(pyridoxal phosphate)lysine (K241).

This sequence belongs to the SHMT family. Homodimer. Pyridoxal 5'-phosphate serves as cofactor.

Its subcellular location is the cytoplasm. It catalyses the reaction (6R)-5,10-methylene-5,6,7,8-tetrahydrofolate + glycine + H2O = (6S)-5,6,7,8-tetrahydrofolate + L-serine. The protein operates within one-carbon metabolism; tetrahydrofolate interconversion. It participates in amino-acid biosynthesis; glycine biosynthesis; glycine from L-serine: step 1/1. Catalyzes the reversible interconversion of serine and glycine with tetrahydrofolate (THF) serving as the one-carbon carrier. This reaction serves as the major source of one-carbon groups required for the biosynthesis of purines, thymidylate, methionine, and other important biomolecules. Also exhibits THF-independent aldolase activity toward beta-hydroxyamino acids, producing glycine and aldehydes, via a retro-aldol mechanism. In Nitrobacter winogradskyi (strain ATCC 25391 / DSM 10237 / CIP 104748 / NCIMB 11846 / Nb-255), this protein is Serine hydroxymethyltransferase.